A 66-amino-acid polypeptide reads, in one-letter code: Beta-defensin 107A (66 aa).

An N-terminal signal peptide occupies residues 1–22 (MKIFFFIFAALILLAQIFQART). 2 disulfides stabilise this stretch: C37–C51 and C41–C60.

Belongs to the beta-defensin family.

It localises to the secreted. Has antibacterial activity. The sequence is that of Beta-defensin 107A (DEFB107A) from Hylobates lar (Lar gibbon).